The following is a 585-amino-acid chain: Protein-lysine N-methyltransferase EFM1 (585 aa).

The SET domain maps to 23 to 281 (PKISFRITED…AQDELFNNYG (259 aa)). Y280 contributes to the S-adenosyl-L-methionine binding site.

This sequence belongs to the class V-like SAM-binding methyltransferase superfamily. RKM1 family.

It is found in the cytoplasm. Its function is as follows. S-adenosyl-L-methionine-dependent protein-lysine N-methyltransferase that monomethylates elongation factor 1-alpha (TEF1/TEF2) at 'Lys-30'. This Saccharomyces cerevisiae (strain ATCC 204508 / S288c) (Baker's yeast) protein is Protein-lysine N-methyltransferase EFM1.